The following is a 264-amino-acid chain: 4-hydroxy-tetrahydrodipicolinate reductase (264 aa).

9 to 14 contributes to the NAD(+) binding site; that stretch reads GCSGRM. R36 serves as a coordination point for NADP(+). NAD(+)-binding positions include 100–102 and 121–124; these read GTT and SANM. Catalysis depends on H154, which acts as the Proton donor/acceptor. Residue H155 coordinates (S)-2,3,4,5-tetrahydrodipicolinate. The active-site Proton donor is K158. A (S)-2,3,4,5-tetrahydrodipicolinate-binding site is contributed by 164–165; it reads GT.

The protein belongs to the DapB family.

Its subcellular location is the cytoplasm. It catalyses the reaction (S)-2,3,4,5-tetrahydrodipicolinate + NAD(+) + H2O = (2S,4S)-4-hydroxy-2,3,4,5-tetrahydrodipicolinate + NADH + H(+). It carries out the reaction (S)-2,3,4,5-tetrahydrodipicolinate + NADP(+) + H2O = (2S,4S)-4-hydroxy-2,3,4,5-tetrahydrodipicolinate + NADPH + H(+). It functions in the pathway amino-acid biosynthesis; L-lysine biosynthesis via DAP pathway; (S)-tetrahydrodipicolinate from L-aspartate: step 4/4. Catalyzes the conversion of 4-hydroxy-tetrahydrodipicolinate (HTPA) to tetrahydrodipicolinate. The polypeptide is 4-hydroxy-tetrahydrodipicolinate reductase (Wolbachia sp. subsp. Brugia malayi (strain TRS)).